The primary structure comprises 407 residues: Phosphopentomutase (407 aa).

Mn(2+) contacts are provided by aspartate 10, aspartate 306, histidine 311, aspartate 347, histidine 348, and histidine 359.

The protein belongs to the phosphopentomutase family. Mn(2+) serves as cofactor.

The protein resides in the cytoplasm. The catalysed reaction is 2-deoxy-alpha-D-ribose 1-phosphate = 2-deoxy-D-ribose 5-phosphate. It carries out the reaction alpha-D-ribose 1-phosphate = D-ribose 5-phosphate. The protein operates within carbohydrate degradation; 2-deoxy-D-ribose 1-phosphate degradation; D-glyceraldehyde 3-phosphate and acetaldehyde from 2-deoxy-alpha-D-ribose 1-phosphate: step 1/2. Isomerase that catalyzes the conversion of deoxy-ribose 1-phosphate (dRib-1-P) and ribose 1-phosphate (Rib-1-P) to deoxy-ribose 5-phosphate (dRib-5-P) and ribose 5-phosphate (Rib-5-P), respectively. This is Phosphopentomutase from Salmonella schwarzengrund (strain CVM19633).